Consider the following 67-residue polypeptide: uncharacterized protein (67 aa).

Belongs to the baculoviridae 8 kDa protein family.

This is an uncharacterized protein from Autographa californica nuclear polyhedrosis virus (AcMNPV).